The primary structure comprises 345 residues: Pyruvate dehydrogenase E1 component subunit alpha (345 aa).

In terms of assembly, heterodimer of an alpha and a beta chain. The cofactor is thiamine diphosphate.

The catalysed reaction is N(6)-[(R)-lipoyl]-L-lysyl-[protein] + pyruvate + H(+) = N(6)-[(R)-S(8)-acetyldihydrolipoyl]-L-lysyl-[protein] + CO2. The pyruvate dehydrogenase complex catalyzes the overall conversion of pyruvate to acetyl-CoA and CO(2). It contains multiple copies of three enzymatic components: pyruvate dehydrogenase (E1), dihydrolipoamide acetyltransferase (E2) and lipoamide dehydrogenase (E3). The chain is Pyruvate dehydrogenase E1 component subunit alpha (pdhA) from Acholeplasma laidlawii.